The chain runs to 793 residues: Phosphoribosylformylglycinamidine synthase subunit PurL (793 aa).

Residue His-53 is part of the active site. 2 residues coordinate ATP: Tyr-56 and Lys-95. Glu-97 is a binding site for Mg(2+). Substrate-binding positions include 98-101 and Arg-120; that span reads SHNH. Residue His-99 is the Proton acceptor of the active site. Asp-121 lines the Mg(2+) pocket. Position 244 (Gln-244) interacts with substrate. Residue Asp-272 coordinates Mg(2+). Residue 316–318 coordinates substrate; that stretch reads ESQ. Positions 523 and 560 each coordinate ATP. Position 561 (Asn-561) interacts with Mg(2+). Ser-563 lines the substrate pocket.

It belongs to the FGAMS family. In terms of assembly, monomer. Part of the FGAM synthase complex composed of 1 PurL, 1 PurQ and 2 PurS subunits.

Its subcellular location is the cytoplasm. The catalysed reaction is N(2)-formyl-N(1)-(5-phospho-beta-D-ribosyl)glycinamide + L-glutamine + ATP + H2O = 2-formamido-N(1)-(5-O-phospho-beta-D-ribosyl)acetamidine + L-glutamate + ADP + phosphate + H(+). The protein operates within purine metabolism; IMP biosynthesis via de novo pathway; 5-amino-1-(5-phospho-D-ribosyl)imidazole from N(2)-formyl-N(1)-(5-phospho-D-ribosyl)glycinamide: step 1/2. Part of the phosphoribosylformylglycinamidine synthase complex involved in the purines biosynthetic pathway. Catalyzes the ATP-dependent conversion of formylglycinamide ribonucleotide (FGAR) and glutamine to yield formylglycinamidine ribonucleotide (FGAM) and glutamate. The FGAM synthase complex is composed of three subunits. PurQ produces an ammonia molecule by converting glutamine to glutamate. PurL transfers the ammonia molecule to FGAR to form FGAM in an ATP-dependent manner. PurS interacts with PurQ and PurL and is thought to assist in the transfer of the ammonia molecule from PurQ to PurL. This is Phosphoribosylformylglycinamidine synthase subunit PurL from Prochlorococcus marinus (strain SARG / CCMP1375 / SS120).